The sequence spans 908 residues: 3-phosphoinositide-dependent protein kinase B (908 aa).

Low complexity-rich tracts occupy residues 53–170 (NNNF…SSSL), 179–189 (YSDSSDSIDSY), and 200–216 (QQQQ…QPLH). The tract at residues 53–267 (NNNFNNNNNN…PNSSIPHKKS (215 aa)) is disordered. Positions 250 to 262 (KTSSFGLQPNSSI) are enriched in polar residues. The Protein kinase domain occupies 271-527 (FDFIRTIGKG…ISEIKNHEFF (257 aa)). ATP is bound by residues 281–283 (AYG) and lysine 300. The PIF-pocket stretch occupies residues 302 to 346 (LNKKLIIKEKKAKYVNTEKTILDSLDNPNIVKLFYTFQDENNLYF). ATP is bound by residues 349-351 (EYC) and aspartate 355. Aspartate 394 functions as the Proton acceptor in the catalytic mechanism. ATP contacts are provided by glutamate 398 and aspartate 412. Disordered regions lie at residues 538-560 (SQTP…NSSL) and 606-755 (ISNN…KNLQ). A compositionally biased stretch (low complexity) spans 607-684 (SNNNNNNNNT…PAYSSTPSST (78 aa)). The span at 696 to 709 (SSCSSNNLLGKSSN) shows a compositional bias: polar residues. Positions 710 to 741 (QQYQPFQFHQQQQQQQQQQQRERSSTTTPSPT) are enriched in low complexity. A PH domain is found at 764-902 (SSFSTSSPMS…KLWVDLINEL (139 aa)).

The protein belongs to the protein kinase superfamily. AGC Ser/Thr protein kinase family. PDPK1 subfamily.

It carries out the reaction L-seryl-[protein] + ATP = O-phospho-L-seryl-[protein] + ADP + H(+). The enzyme catalyses L-threonyl-[protein] + ATP = O-phospho-L-threonyl-[protein] + ADP + H(+). This is 3-phosphoinositide-dependent protein kinase B (pdkB) from Dictyostelium discoideum (Social amoeba).